The following is a 538-amino-acid chain: (R)-citramalate synthase (538 aa).

Residues 3-268 (IKVYDTTLRD…IPKENLKKLF (266 aa)) enclose the Pyruvate carboxyltransferase domain.

Belongs to the alpha-IPM synthase/homocitrate synthase family.

The catalysed reaction is pyruvate + acetyl-CoA + H2O = (3R)-citramalate + CoA + H(+). Its pathway is amino-acid biosynthesis; L-isoleucine biosynthesis; 2-oxobutanoate from pyruvate: step 1/3. Catalyzes the condensation of pyruvate and acetyl-coenzyme A to form (R)-citramalate. This Thermotoga maritima (strain ATCC 43589 / DSM 3109 / JCM 10099 / NBRC 100826 / MSB8) protein is (R)-citramalate synthase.